Consider the following 372-residue polypeptide: Putative glutamate--cysteine ligase 2 (372 aa).

This sequence belongs to the glutamate--cysteine ligase type 2 family. YbdK subfamily. Homodimer.

It carries out the reaction L-cysteine + L-glutamate + ATP = gamma-L-glutamyl-L-cysteine + ADP + phosphate + H(+). ATP-dependent carboxylate-amine ligase which exhibits weak glutamate--cysteine ligase activity. This is Putative glutamate--cysteine ligase 2 (ybdK) from Escherichia coli O1:K1 / APEC.